Reading from the N-terminus, the 311-residue chain is Ornithine carbamoyltransferase (311 aa).

Carbamoyl phosphate contacts are provided by residues 54–58 (STRTR), Asn81, Arg104, and 131–134 (HPCQ). Residues Asn164, Asp225, and 229-230 (DM) contribute to the L-ornithine site. Residues 268 to 271 (HDMP), Thr279, and Arg297 each bind carbamoyl phosphate.

This sequence belongs to the aspartate/ornithine carbamoyltransferase superfamily. OTCase family.

Its subcellular location is the cytoplasm. It catalyses the reaction carbamoyl phosphate + L-ornithine = L-citrulline + phosphate + H(+). It participates in amino-acid biosynthesis; L-arginine biosynthesis; L-arginine from L-ornithine and carbamoyl phosphate: step 1/3. Functionally, reversibly catalyzes the transfer of the carbamoyl group from carbamoyl phosphate (CP) to the N(epsilon) atom of ornithine (ORN) to produce L-citrulline. In Leptospira interrogans serogroup Icterohaemorrhagiae serovar copenhageni (strain Fiocruz L1-130), this protein is Ornithine carbamoyltransferase (argF).